Reading from the N-terminus, the 336-residue chain is Cytochrome P450 monooxygenase lcsN (336 aa).

Residue C271 coordinates heme.

This sequence belongs to the cytochrome P450 family. The cofactor is heme.

It functions in the pathway secondary metabolite biosynthesis. Cytochrome P450 monooxygenase; part of the gene cluster that mediates the biosynthesis of the lipopeptide antibiotics leucinostatins that show extensive biological activities, including antimalarial, antiviral, antibacterial, antifungal, and antitumor activities, as well as phytotoxic. Leucinostatin A contains nine amino acid residues, including the unusual amino acid 4-methyl-L-proline (MePro), 2-amino-6-hydroxy-4-methyl-8-oxodecanoic acid (AHyMeOA), 3-hydroxyleucine (HyLeu), alpha-aminoisobutyric acid (AIB), beta-Ala, a 4-methylhex-2-enoic acid at the N-terminus as well as a N1,N1-dimethylpropane-1,2-diamine (DPD) at the C-terminus. The biosynthesis of leucinostatins is probably initiated with the assembly of 4-methylhex-2-enoic acid by a reducing PKS. Two reducing polyketide synthases, lcsB and lcsC, have been identified in the cluster and it is not clear which is the one that assembles 4-methylhex-2-enoic acid since both contain KS, AT, DH, cMT, ER, KR and ACP domains. The polyketide residue might be transferred to the NRPS lcsA, mediated by two additional enzymes, the acyl-CoA ligase lcsD and the thioesterase lcsE. The linear polyketide carboxylic acid, which is released from PKS, is converted to a CoA thioester by lcsD, and then lcsE hydrolyzes the thiol bond and shuttles the polyketide intermediate to lcsA. The C domain of the first module catalyzed the condensation of 4-methylhex-2-enoic acid and MePro carried by domain A1, followed by successive condensations of nine amino acids to trigger the elongation of the linear peptide. A5 and A6 domains of lcsA are proposed to incorporate leucine, A2 AHyMeOA, and A3 incorporates HyLeu. A4, A7 and A8 incorporate AIB. The AHyMeOA in leucinostatin A activated by the A2 might be produced by the second PKS (lcsB or lcsC) present within the cluster. The MePro is probably produced via leucine cyclization and may originate from a separate pathway, independent of the cluster. Another nonproteinogenic amino acid, beta-Ala, could be produced by an aspartic acid decarboxylase also localized outside of the cluster. Two candidates are VFPBJ_01400 and VFPBJ_10476. The final peptide scaffold may be released by the NAD(P)H-dependent thioester reductase (TE) at the C-terminal region of lcsA. Transamination of the lcsA product by the transaminase lcsP may produce DPD at the C-terminus. Further hydroxylation steps performed alternatively by the cytochrome P450 monooxygenases lcsI, lcsK and lcsN then yield the non-methylated leucinostatins precursor. It is also possible that leucines can be hydroxylated prior to their incorporation into the peptide. Varying extents of methylation then lead to the formation of leucinostatins A and B. This chain is Cytochrome P450 monooxygenase lcsN, found in Purpureocillium lilacinum (Paecilomyces lilacinus).